Here is a 340-residue protein sequence, read N- to C-terminus: 2-deoxy-scyllo-inosamine dehydrogenase (340 aa).

Zn(2+) is bound by residues Cys-37, His-59, Cys-89, Cys-92, Cys-95, Cys-103, and Glu-144.

This sequence belongs to the zinc-containing alcohol dehydrogenase family. DOIA dehydrogenase subfamily. Zn(2+) serves as cofactor.

It carries out the reaction 2-deoxy-scyllo-inosamine + NADP(+) = 3-amino-2,3-dideoxy-scyllo-inosose + NADPH + H(+). The catalysed reaction is 2-deoxy-scyllo-inosamine + NAD(+) = 3-amino-2,3-dideoxy-scyllo-inosose + NADH + H(+). Its pathway is metabolic intermediate biosynthesis; 2-deoxystreptamine biosynthesis; 2-deoxystreptamine from D-glucose 6-phosphate: step 3/4. It participates in antibiotic biosynthesis; neomycin biosynthesis. In terms of biological role, catalyzes the oxidation of 2-deoxy-scyllo-inosamine (DOIA) with NAD(+) or NADP(+), forming 3-amino-2,3-dideoxy-scyllo-inosose (amino-DOI). This chain is 2-deoxy-scyllo-inosamine dehydrogenase (neoA), found in Streptomyces fradiae (Streptomyces roseoflavus).